Here is a 332-residue protein sequence, read N- to C-terminus: Ferredoxin--NADP reductase 2 (332 aa).

FAD contacts are provided by glutamate 37, glutamine 45, tyrosine 50, valine 90, phenylalanine 124, aspartate 285, and threonine 326.

This sequence belongs to the ferredoxin--NADP reductase type 2 family. As to quaternary structure, homodimer. FAD serves as cofactor.

It carries out the reaction 2 reduced [2Fe-2S]-[ferredoxin] + NADP(+) + H(+) = 2 oxidized [2Fe-2S]-[ferredoxin] + NADPH. This Bacillus pumilus (strain SAFR-032) protein is Ferredoxin--NADP reductase 2.